The sequence spans 359 residues: 4-galactosyl-N-acetylglucosaminide 3-alpha-L-fucosyltransferase FUT6 (359 aa).

Residues 1–14 lie on the Cytoplasmic side of the membrane; sequence MDPLGPAKTQWSWR. Residues 15–34 form a helical; Signal-anchor for type II membrane protein membrane-spanning segment; it reads CCLTALLFQLLVAVCFFSYL. Over 35 to 359 the chain is Lumenal; it reads RVSRDDPTVY…QTRSIAAWFT (325 aa). Residues 73-112 form a determines site-specific fucosylation region; sequence KPIALPRCSEMVPGTADCNITADRKVYPQADAVIVHHREV. 3 N-linked (GlcNAc...) asparagine glycosylation sites follow: asparagine 91, asparagine 153, and asparagine 184.

This sequence belongs to the glycosyltransferase 10 family. Homodimer and monomer. Monomer (secreted form). N-glycosylated. In terms of processing, proteolytic cleavage releases a secreted glycoform of 43 kDa.

Its subcellular location is the golgi apparatus. It is found in the golgi stack membrane. It localises to the secreted. The catalysed reaction is a beta-D-galactosyl-(1-&gt;4)-N-acetyl-beta-D-glucosaminyl derivative + GDP-beta-L-fucose = a beta-D-galactosyl-(1-&gt;4)-[alpha-L-fucosyl-(1-&gt;3)]-N-acetyl-beta-D-glucosaminyl derivative + GDP + H(+). The enzyme catalyses an N-acetyl-alpha-neuraminyl-(2-&gt;3)-beta-D-galactosyl-(1-&gt;4)-N-acetyl-beta-D-glucosaminyl derivative + GDP-beta-L-fucose = an alpha-Neu5Ac-(2-&gt;3)-beta-D-Gal-(1-&gt;4)-[alpha-L-Fuc-(1-&gt;3)]-beta-D-GlcNAc derivative + GDP + H(+). It catalyses the reaction an alpha-Neu5Ac-(2-&gt;3)-beta-D-Gal-(1-&gt;4)-beta-D-GlcNAc-(1-&gt;3)-beta-D-Gal-(1-&gt;4)-[alpha-L-Fuc-(1-&gt;3)]-beta-D-GlcNAc derivative + GDP-beta-L-fucose = an alpha-Neu5Ac-(2-&gt;3)-beta-D-Gal-(1-&gt;4)-[alpha-L-Fuc-(1-&gt;3)]-beta-D-GlcNAc-(1-&gt;3)-beta-D-Gal-(1-&gt;4)-[alpha-L-Fuc-(1-&gt;3)]-beta-D-GlcNAc derivative + GDP + H(+). It carries out the reaction a neolactoside nLc6Cer + GDP-beta-L-fucose = beta-D-Gal-(1-&gt;4)-[alpha-L-Fuc-(1-&gt;3)]-beta-D-GlcNAc-(1-&gt;3)-beta-D-Gal-(1-&gt;4)-beta-D-GlcNAc-(1-&gt;3)-beta-D-Gal-(1-&gt;4)-beta-D-Glc-(1&lt;-&gt;1')-Cer + GDP + H(+). The catalysed reaction is a neolactoside nLc6Cer + GDP-beta-L-fucose = beta-D-galactosyl-(1-&gt;4)-N-acetyl-beta-D-glucosaminyl-(1-&gt;3)-beta-D-galactosyl-(1-&gt;4)-[alpha-L-fucosyl-(1-&gt;3)]-N-acetyl-beta-D-glucosaminyl-(1-&gt;3)-beta-D-galactosyl-(1-&gt;4)-beta-D-glucosyl-(1&lt;-&gt;1')-ceramide + GDP + H(+). The enzyme catalyses a neolactoside VI(3)-alpha-NeuNAc-nLc6Cer + GDP-beta-L-fucose = a neolactoside VI(3)-alpha-NeuAc,V(3)-alphaFuc-nLc6Cer + GDP + H(+). It catalyses the reaction beta-D-galactosyl-(1-&gt;4)-N-acetyl-D-glucosamine + GDP-beta-L-fucose = beta-D-galactosyl-(1-&gt;4)-[alpha-L-fucosyl-(1-&gt;3)]-N-acetyl-D-glucosamine + GDP + H(+). It carries out the reaction N-acetyl-alpha-neuraminosyl-(2-&gt;3)-beta-D-galactosyl-(1-&gt;4)-N-acetyl-beta-D-glucosamine + GDP-beta-L-fucose = N-acetyl-alpha-neuraminosyl-(2-&gt;3)-beta-D-galactosyl-(1-&gt;4)-[alpha-L-fucosyl-(1-&gt;3)]-N-acetyl-beta-D-glucosamine + GDP + H(+). The catalysed reaction is lactose + GDP-beta-L-fucose = beta-D-galactosyl-(1-&gt;4)-[alpha-L-fucosyl-(1-&gt;3)]-D-glucose + GDP + H(+). The enzyme catalyses alpha-L-Fuc-(1-&gt;2)-beta-D-Gal-(1-&gt;4)-D-Glc + GDP-beta-L-fucose = alpha-L-Fuc-(1-&gt;2)-beta-D-Gal-(1-&gt;4)-[alpha-L-Fuc-(1-&gt;3)]-D-Glc + GDP + H(+). It catalyses the reaction a beta-D-galactosyl-(1-&gt;4)-N-acetyl-beta-D-6-sulfooxy-glucosaminyl derivative + GDP-beta-L-fucose = a beta-D-galactosyl-(1-&gt;4)-[alpha-L-fucosyl-(1-&gt;3)]-N-acetyl-beta-D-6-sulfooxy-glucosaminyl derivative + GDP + H(+). It participates in protein modification; protein glycosylation. Its function is as follows. Catalyzes the transfer of L-fucose, from a guanosine diphosphate-beta-L-fucose, to the N-acetyl glucosamine (GlcNAc) of a distal alpha2,3 sialylated lactosamine unit of a glycoprotein- or glycolipid-linked sialopolylactosamines chain or of a distal or internal lactosamine unit of a neutral glycoprotein- or glycolipid-linked polylactosamines chain through an alpha-1,3 glycosidic linkage and participates in surface expression of the sialyl Lewis X (sLe(x)), Lewis X (Le(x)) and non sialylated VIM2 determinants. Moreover transfers fucose to H-type 2 (Fucalpha1-2Galbeta1-4GlcNAc) chain acceptor substrates and participates in difucosylated sialyl Lewis x determinants. Also fucosylates a polylactosamine substrate having a 6 sulfate modification at the GlcNAc moiety and gives rise to sialyl and non-sialyl 6-sulfo lewis X. Does not have activity towards type 1 ((Galbeta1-3GlcNAc)) and H-type 1 chain (Fucalpha1-2Galbeta1-3GlcNAc) acceptors substrates. The protein is 4-galactosyl-N-acetylglucosaminide 3-alpha-L-fucosyltransferase FUT6 of Pongo pygmaeus (Bornean orangutan).